We begin with the raw amino-acid sequence, 54 residues long: Sec-independent protein translocase protein TatA (54 aa).

Residues 1-21 (MGMSFSHLLIVLLIIFVLFGA) traverse the membrane as a helical segment.

The protein belongs to the TatA/E family. In terms of assembly, the Tat system comprises two distinct complexes: a TatABC complex, containing multiple copies of TatA, TatB and TatC subunits, and a separate TatA complex, containing only TatA subunits. Substrates initially bind to the TatABC complex, which probably triggers association of the separate TatA complex to form the active translocon.

The protein localises to the cell inner membrane. Part of the twin-arginine translocation (Tat) system that transports large folded proteins containing a characteristic twin-arginine motif in their signal peptide across membranes. TatA could form the protein-conducting channel of the Tat system. In Rickettsia prowazekii (strain Madrid E), this protein is Sec-independent protein translocase protein TatA.